The chain runs to 182 residues: uncharacterized protein (182 aa).

The disordered stretch occupies residues 151–172 (RGPGKPFADEKPCPRERPPADQ). Positions 157–169 (FADEKPCPRERPP) are enriched in basic and acidic residues.

This is an uncharacterized protein from Mycobacterium tuberculosis (strain CDC 1551 / Oshkosh).